The chain runs to 248 residues: PF03932 family protein CutC (248 aa).

Belongs to the CutC family. Homodimer.

The protein resides in the cytoplasm. This Escherichia coli O157:H7 protein is PF03932 family protein CutC.